Here is a 348-residue protein sequence, read N- to C-terminus: Protein RecA (348 aa).

An ATP-binding site is contributed by 66–73 (GPESSGKT).

Belongs to the RecA family.

It localises to the cytoplasm. Can catalyze the hydrolysis of ATP in the presence of single-stranded DNA, the ATP-dependent uptake of single-stranded DNA by duplex DNA, and the ATP-dependent hybridization of homologous single-stranded DNAs. It interacts with LexA causing its activation and leading to its autocatalytic cleavage. In Legionella pneumophila (strain Lens), this protein is Protein RecA.